Here is a 379-residue protein sequence, read N- to C-terminus: Trans-prenyltransferase abpB (379 aa).

Substrate-binding positions include 90–91, R112, K197, R264, K266, Y268, and Y338; that span reads RL.

This sequence belongs to the tryptophan dimethylallyltransferase family.

The enzyme catalyses aspulvinone E + 2 dimethylallyl diphosphate = aspulvinone H + 2 diphosphate. It catalyses the reaction butyrolactone II + dimethylallyl diphosphate = butyrolactone I + diphosphate. It participates in secondary metabolite biosynthesis. Functionally, trans-prenyltransferase that acts in both the aspulvinones and butyrolactones pathways. Prenylates aspulvinone E and butyrolactone II to yield repectively aspulvinone H and butyrolactone I. This is Trans-prenyltransferase abpB from Aspergillus terreus (strain NIH 2624 / FGSC A1156).